The chain runs to 90 residues: Putative defensin-like protein 64 (90 aa).

A signal peptide spans 1-23 (MWGRQIVLKIFFLVLSCVIVIET). Disulfide bonds link Cys-33–Cys-56 and Cys-42–Cys-77.

This sequence belongs to the DEFL family.

The protein localises to the secreted. This Arabidopsis thaliana (Mouse-ear cress) protein is Putative defensin-like protein 64.